The sequence spans 392 residues: Na(+)/H(+) antiporter NhaA 2 (392 aa).

11 consecutive transmembrane segments (helical) span residues 20-40 (FFAA…AALI), 61-81 (LSVS…LVGL), 99-119 (ALPG…YVAF), 127-147 (IGGW…VLSL), 158-178 (IFLS…IALF), 181-201 (SDLS…LVAL), 209-229 (LLPY…SGIH), 265-285 (VAFA…LSGI), 298-318 (VALG…ALAI), 336-356 (GVAA…ALAF), and 365-385 (EVKV…VVVL).

This sequence belongs to the NhaA Na(+)/H(+) (TC 2.A.33) antiporter family.

It localises to the cell inner membrane. The catalysed reaction is Na(+)(in) + 2 H(+)(out) = Na(+)(out) + 2 H(+)(in). Its function is as follows. Na(+)/H(+) antiporter that extrudes sodium in exchange for external protons. The polypeptide is Na(+)/H(+) antiporter NhaA 2 (Pseudomonas syringae pv. syringae (strain B728a)).